The chain runs to 384 residues: F-box protein At2g07140 (384 aa).

The region spanning 1–46 (MTLPELPKDLVEEILSFVPATSLKRLRSTCKGWNRLFKDDKRFTRI) is the F-box domain.

The sequence is that of F-box protein At2g07140 from Arabidopsis thaliana (Mouse-ear cress).